The following is a 308-amino-acid chain: Polyprenal reductase (308 aa).

The Cytoplasmic portion of the chain corresponds to 1–2 (MT). Residues 3–23 (LLALVWLLLDATFLITLLWHL) form a helical membrane-spanning segment. Residues 24-65 (LQGCKSGHSLLCSVFQDLIRYGKTKTGLQRPAWLQWFDIPKR) lie on the Lumenal side of the membrane. A helical membrane pass occupies residues 66 to 86 (CFWHFYCVSLIWNGCLLWILL). Residues 87–120 (RLLLQSVPVPEWLQLVLHFLHAGSEPQILDRELS) are Cytoplasmic-facing. Residues 121-141 (VILALALLWLHSLRRLLECLF) traverse the membrane as a helical segment. Residues 142 to 148 (VSVFSNG) lie on the Lumenal side of the membrane. A helical membrane pass occupies residues 149 to 169 (VIHLVQYCFGLGYYFLIGITV). Over 170 to 184 (LTYCPLDRRTVSTDN) the chain is Cytoplasmic. A helical membrane pass occupies residues 185 to 205 (LLTQCHWYHILGLALYIWASL). The Lumenal segment spans residues 206–255 (HQYRCHCILAGLRKSASGNVINLNHSVPCGDWFERVSCPHYFAELLIYVS). Residues 256–276 (IAVVFGLLNTIWWLVVLYVLL) form a helical membrane-spanning segment. Residues 277–308 (NQALAALLCHEFYHEKFDTYPIHRKAFIPFIF) are Cytoplasmic-facing.

This sequence belongs to the steroid 5-alpha reductase family. Polyprenal reductase subfamily.

It localises to the endoplasmic reticulum membrane. It catalyses the reaction a di-trans,poly-cis-dolichal + NADP(+) = a di-trans,poly-cis-polyprenal + NADPH + H(+). The catalysed reaction is a 3-oxo-5alpha-steroid + NADP(+) = a 3-oxo-Delta(4)-steroid + NADPH + H(+). The enzyme catalyses androst-4-ene-3,17-dione + NADPH + H(+) = 5alpha-androstan-3,17-dione + NADP(+). It carries out the reaction 17beta-hydroxy-5alpha-androstan-3-one + NADP(+) = testosterone + NADPH + H(+). It functions in the pathway protein modification; protein glycosylation. Plays a key role in early steps of protein N-linked glycosylation by being involved in the conversion of polyprenol into dolichol. Acts as a polyprenal reductase that mediates the reduction of polyprenal into dolichal in a NADP-dependent mechanism. Dolichols are required for the synthesis of dolichol-linked monosaccharides and the oligosaccharide precursor used for N-glycosylation. Also able to convert testosterone (T) into 5-alpha-dihydrotestosterone (DHT). This chain is Polyprenal reductase (srd5a3), found in Xenopus tropicalis (Western clawed frog).